The sequence spans 476 residues: Ribulose bisphosphate carboxylase large chain (476 aa).

Positions 1 to 2 (MS) are excised as a propeptide. P3 bears the N-acetylproline mark. K14 carries the N6,N6,N6-trimethyllysine modification. 2 residues coordinate substrate: N123 and T173. K175 serves as the catalytic Proton acceptor. Position 177 (K177) interacts with substrate. Mg(2+) contacts are provided by K201, D203, and E204. The residue at position 201 (K201) is an N6-carboxylysine. H294 serves as the catalytic Proton acceptor. R295, H327, and S379 together coordinate substrate.

This sequence belongs to the RuBisCO large chain family. Type I subfamily. As to quaternary structure, heterohexadecamer of 8 large chains and 8 small chains; disulfide-linked. The disulfide link is formed within the large subunit homodimers. Mg(2+) is required as a cofactor. Post-translationally, the disulfide bond which can form in the large chain dimeric partners within the hexadecamer appears to be associated with oxidative stress and protein turnover.

The protein resides in the plastid. Its subcellular location is the chloroplast. The enzyme catalyses 2 (2R)-3-phosphoglycerate + 2 H(+) = D-ribulose 1,5-bisphosphate + CO2 + H2O. The catalysed reaction is D-ribulose 1,5-bisphosphate + O2 = 2-phosphoglycolate + (2R)-3-phosphoglycerate + 2 H(+). Functionally, ruBisCO catalyzes two reactions: the carboxylation of D-ribulose 1,5-bisphosphate, the primary event in carbon dioxide fixation, as well as the oxidative fragmentation of the pentose substrate in the photorespiration process. Both reactions occur simultaneously and in competition at the same active site. In Brachypodium distachyon (Purple false brome), this protein is Ribulose bisphosphate carboxylase large chain.